The chain runs to 427 residues: L-rhamnose isomerase (427 aa).

Residues histidine 264, aspartate 296, and aspartate 298 each contribute to the Mn(2+) site.

The protein belongs to the rhamnose isomerase family. The cofactor is Mn(2+).

It is found in the cytoplasm. It carries out the reaction L-rhamnopyranose = L-rhamnulose. Its pathway is carbohydrate degradation; L-rhamnose degradation; glycerone phosphate from L-rhamnose: step 1/3. In terms of biological role, catalyzes the interconversion of L-rhamnose and L-rhamnulose. In Lactiplantibacillus plantarum (strain ATCC BAA-793 / NCIMB 8826 / WCFS1) (Lactobacillus plantarum), this protein is L-rhamnose isomerase.